Here is a 244-residue protein sequence, read N- to C-terminus: ATP synthase subunit b 2 (244 aa).

Residues 2 to 22 form a helical membrane-spanning segment; the sequence is LIDWFTIVAQIINFLILVFLL.

The protein belongs to the ATPase B chain family. In terms of assembly, F-type ATPases have 2 components, F(1) - the catalytic core - and F(0) - the membrane proton channel. F(1) has five subunits: alpha(3), beta(3), gamma(1), delta(1), epsilon(1). F(0) has four main subunits: a(1), b(1), b'(1) and c(10-14). The alpha and beta chains form an alternating ring which encloses part of the gamma chain. F(1) is attached to F(0) by a central stalk formed by the gamma and epsilon chains, while a peripheral stalk is formed by the delta, b and b' chains.

It localises to the cellular thylakoid membrane. Functionally, f(1)F(0) ATP synthase produces ATP from ADP in the presence of a proton or sodium gradient. F-type ATPases consist of two structural domains, F(1) containing the extramembraneous catalytic core and F(0) containing the membrane proton channel, linked together by a central stalk and a peripheral stalk. During catalysis, ATP synthesis in the catalytic domain of F(1) is coupled via a rotary mechanism of the central stalk subunits to proton translocation. Its function is as follows. Component of the F(0) channel, it forms part of the peripheral stalk, linking F(1) to F(0). This chain is ATP synthase subunit b 2, found in Crocosphaera subtropica (strain ATCC 51142 / BH68) (Cyanothece sp. (strain ATCC 51142)).